The following is a 513-amino-acid chain: ATP synthase subunit alpha (513 aa).

169–176 (GDRQTGKT) lines the ATP pocket.

The protein belongs to the ATPase alpha/beta chains family. In terms of assembly, F-type ATPases have 2 components, CF(1) - the catalytic core - and CF(0) - the membrane proton channel. CF(1) has five subunits: alpha(3), beta(3), gamma(1), delta(1), epsilon(1). CF(0) has three main subunits: a(1), b(2) and c(9-12). The alpha and beta chains form an alternating ring which encloses part of the gamma chain. CF(1) is attached to CF(0) by a central stalk formed by the gamma and epsilon chains, while a peripheral stalk is formed by the delta and b chains.

It localises to the cell inner membrane. The catalysed reaction is ATP + H2O + 4 H(+)(in) = ADP + phosphate + 5 H(+)(out). Functionally, produces ATP from ADP in the presence of a proton gradient across the membrane. The alpha chain is a regulatory subunit. The sequence is that of ATP synthase subunit alpha from Dichelobacter nodosus (strain VCS1703A).